The sequence spans 627 residues: (-)-beta-pinene synthase 2, chloroplastic (627 aa).

The transit peptide at 1 to 51 (MDLISVLPSASKSCVCLHKPLSSSTHKLKPFCRKIRILGMPRPRKSVLMVS) directs the protein to the chloroplast. Mg(2+) is bound by residues Asp-378, Asp-382, and Asp-530. The DDXXD motif signature appears at 378–382 (DDMYD).

Belongs to the terpene synthase family. Tpsd subfamily. Mg(2+) serves as cofactor. It depends on Mn(2+) as a cofactor.

It is found in the plastid. It localises to the chloroplast. It catalyses the reaction (2E)-geranyl diphosphate = (1S,5S)-beta-pinene + diphosphate. It carries out the reaction (2E)-geranyl diphosphate = (1S,5S)-alpha-pinene + diphosphate. It functions in the pathway terpene metabolism; oleoresin biosynthesis. Its pathway is secondary metabolite biosynthesis; terpenoid biosynthesis. Monoterpene synthase (TPS) involved in the biosynthesis of monoterpene natural products included in conifer oleoresin secretions and volatile emissions; these compounds contribute to biotic and abiotic stress defense against herbivores and pathogens. Catalyzes the conversion of (2E)-geranyl diphosphate (GPP) to (-)-beta-pinene and, to a lower extent, to (-)-alpha-pinene. This Pinus banksiana (Jack pine) protein is (-)-beta-pinene synthase 2, chloroplastic.